The following is a 210-amino-acid chain: Kalata-B2 (210 aa).

A signal peptide spans 1-22 (MAKFTNCLVLSLLLAAFVGAFG). Residues 23 to 66 (AEFSEADKATLVNDIAENIQKEILGEVKTSETVLTMFLKEMQLK) constitute a propeptide that is removed on maturation. The segment at residues 67–95 (GLPVCGETCFGGTCNTPGCSCTWPICTRD) is a cross-link (cyclopeptide (Gly-Asp)). Disulfide bonds link cysteine 71-cysteine 85, cysteine 75-cysteine 87, and cysteine 80-cysteine 92. Positions 96–120 (SLPMRAGGKTSETTLHMFLKEMQLK) are excised as a propeptide. The segment at residues 121 to 149 (GLPVCGETCFGGTCNTPGCSCTWPICTRD) is a cross-link (cyclopeptide (Gly-Asp)). Intrachain disulfides connect cysteine 125/cysteine 139, cysteine 129/cysteine 141, and cysteine 134/cysteine 146. Positions 150–174 (SLPMSAGGKTSETTLHMFLKEMQLK) are excised as a propeptide. Residues 175–203 (GLPVCGETCFGGTCNTPGCSCTWPICTRD) constitute a cross-link (cyclopeptide (Gly-Asp)). Disulfide bonds link cysteine 179/cysteine 193, cysteine 183/cysteine 195, and cysteine 188/cysteine 200. Positions 204 to 210 (SLPLVAA) are excised as a propeptide.

It belongs to the cyclotide family. Moebius subfamily. Kalata-B2 is a cyclic peptide which occurs in three forms: with unmodified Trp, with Trp oxidized to form N-formylkynurenine and with Trp oxidized to form kynurenine. Oxidation is enhanced by exposure to sunlight.

Functionally, probably participates in a plant defense mechanism. Inhibitory effect on the growth and development of larvae from Helicoverpa punctigera. Has hemolytic activity. The protein is Kalata-B2 (OAK4) of Oldenlandia affinis.